The primary structure comprises 186 residues: MFKKLDPSPKWIVYDNNPVMHKPIEDVVFPLTKEDEHVISQMLSYVDASYEGEADKYDIRAGIGIAAIQLGCPKKIIYIHLDDKNGEHKYLMANPKIIKESTSKMYLKNGEGCLSVKKDHKGLSIRKSIVWVKGIDLFTNKEIEVKATDLLAACFQHEVDHNNNKFYYNRINESDPYYVEKNWEEI.

Positions 113 and 157 each coordinate Fe cation. The active site involves glutamate 158. Residue histidine 161 coordinates Fe cation.

It belongs to the polypeptide deformylase family. Fe(2+) serves as cofactor.

The catalysed reaction is N-terminal N-formyl-L-methionyl-[peptide] + H2O = N-terminal L-methionyl-[peptide] + formate. Its function is as follows. Removes the formyl group from the N-terminal Met of newly synthesized proteins. Requires at least a dipeptide for an efficient rate of reaction. N-terminal L-methionine is a prerequisite for activity but the enzyme has broad specificity at other positions. The polypeptide is Peptide deformylase (Malacoplasma penetrans (strain HF-2) (Mycoplasma penetrans)).